Consider the following 213-residue polypeptide: Ribosomal RNA small subunit methyltransferase G (213 aa).

S-adenosyl-L-methionine is bound by residues G75, F80, 128-129 (IE), and R144.

Belongs to the methyltransferase superfamily. RNA methyltransferase RsmG family.

It is found in the cytoplasm. The catalysed reaction is guanosine(527) in 16S rRNA + S-adenosyl-L-methionine = N(7)-methylguanosine(527) in 16S rRNA + S-adenosyl-L-homocysteine. In terms of biological role, specifically methylates the N7 position of guanine in position 527 of 16S rRNA. This chain is Ribosomal RNA small subunit methyltransferase G, found in Brucella ovis (strain ATCC 25840 / 63/290 / NCTC 10512).